Consider the following 435-residue polypeptide: MLQCAPKKNERLRGSCDFCTQSKLRCNKNKPSCRRCTIQQQVCVYSVARRTGRPPKHPRRADDSQETSGQHGHQDPMTSAPADSCEQQSSHLDLEGDDTDFTLVDGRTTAEGRATVAPPVLDNAFLMGETFEFNSLLDDPLVQSEDIFSFSPHIPRGEKGVHMASFHALNESTSPCSPSALLSIDVPQLPTNFRFLESFIGSELHGRNEPHPVEQPDEMEKTYDKGSILLGLDSAINAITNNGKDEPSISGWTVARPHSKHLCFCSMSMSKLQVLVSHPALCRQNSRTPFDMVLFLEEFVFGIHSDVLRCLICQSRSLHSLASLCICTDWVVEALVDVAQDLSLGQDNLGGLRAEICPPKNGSSIYVGRLILADQFRESCTRSLVKYRLRKLIPIMDTMIKLNYRGAGGALSQAIRTMVEDVRHKIESALGMMEL.

The zn(2)-C6 fungal-type DNA-binding region spans 16 to 43 (CDFCTQSKLRCNKNKPSCRRCTIQQQVC). The disordered stretch occupies residues 49 to 103 (RRTGRPPKHPRRADDSQETSGQHGHQDPMTSAPADSCEQQSSHLDLEGDDTDFTL). The span at 50 to 59 (RTGRPPKHPR) shows a compositional bias: basic residues.

The protein localises to the nucleus. Transcription factor that regulates the expression of the gene clusters that mediate the biosynthesis of the host-selective toxins (HSTs) AK-toxins responsible for Japanese pear black spot disease by the Japanese pear pathotype. AK-toxins are esters of 9,10-epoxy 8-hydroxy 9-methyldecatrienoic acid (EDA). On cellular level, AK-toxins affect plasma membrane of susceptible cells and cause a sudden increase in loss of K(+) after a few minutes of toxin treatment. The polypeptide is Transcription activator AKTR-2 (Alternaria alternata (Alternaria rot fungus)).